Consider the following 441-residue polypeptide: Glutamate--tRNA ligase 2 (441 aa).

The short motif at 8–18 is the 'HIGH' region element; sequence PSPTGYIHVGN. Residues 239 to 243 carry the 'KMSKS' region motif; that stretch reads ALSKR. Lysine 242 is a binding site for ATP.

It belongs to the class-I aminoacyl-tRNA synthetase family. Glutamate--tRNA ligase type 1 subfamily. In terms of assembly, monomer.

It is found in the cytoplasm. It carries out the reaction tRNA(Glu) + L-glutamate + ATP = L-glutamyl-tRNA(Glu) + AMP + diphosphate. Its function is as follows. Catalyzes the attachment of glutamate to tRNA(Glu) in a two-step reaction: glutamate is first activated by ATP to form Glu-AMP and then transferred to the acceptor end of tRNA(Glu). The protein is Glutamate--tRNA ligase 2 of Ruegeria sp. (strain TM1040) (Silicibacter sp.).